Consider the following 198-residue polypeptide: Orotate phosphoribosyltransferase (198 aa).

Residues Arg108, Lys109, Lys112, His114, and 135–143 each bind 5-phospho-alpha-D-ribose 1-diphosphate; that span reads EDVVTTGKS. 2 residues coordinate orotate: Thr139 and Arg167.

The protein belongs to the purine/pyrimidine phosphoribosyltransferase family. PyrE subfamily. In terms of assembly, homodimer. Mg(2+) is required as a cofactor.

It carries out the reaction orotidine 5'-phosphate + diphosphate = orotate + 5-phospho-alpha-D-ribose 1-diphosphate. Its pathway is pyrimidine metabolism; UMP biosynthesis via de novo pathway; UMP from orotate: step 1/2. Functionally, catalyzes the transfer of a ribosyl phosphate group from 5-phosphoribose 1-diphosphate to orotate, leading to the formation of orotidine monophosphate (OMP). In Synechocystis sp. (strain ATCC 27184 / PCC 6803 / Kazusa), this protein is Orotate phosphoribosyltransferase.